Reading from the N-terminus, the 799-residue chain is Oxygen sensor protein DosP (799 aa).

A PAS 1 domain is found at 10–81 (ADGIFFPALE…YIRHNREGGK (72 aa)). The heme site is built by H69 and M87. The PAS 2 domain occupies 134–207 (QTRQLIIAVD…LQQLLWKTAR (74 aa)). Positions 208 to 260 (DQDEFLLLTRTGEKIWIKASISPVYDVLAHLQNLVMTFSDITEERQIRQLEGN) constitute a PAC domain. The GGDEF domain maps to 402–532 (VSPVVYLIGV…GGNGWQFFSP (131 aa)). The EAL domain maps to 541-795 (RLVLGAALKE…EIPGWMSSVL (255 aa)).

In terms of assembly, homodimer; has been previously suggested to be a homotetramer based on size exclusion chromatography. Forms a complex with DosC. Heme is required as a cofactor. Mg(2+) serves as cofactor. The heme distal ligand is coordinated by Met-87 in the active Fe(2+) (ferrous) form, by O(2) in the O(2)-bound form and by H(2)O in the inactive Fe(3+) (ferric) form.

The catalysed reaction is 3',3'-c-di-GMP + H2O = 5'-phosphoguanylyl(3'-&gt;5')guanosine + H(+). Has c-di-GMP PDE activity in both Fe(2+) and Fe(3+)-bound forms; this activity is increased 6-7 fold by binding of O(2) and CO and NO. Has cAMP PDE activity only when the heme is in the Fe(2+) form. cAMP PDE activity is inhibited by oxidation of the heme iron and by binding of external ligands such as CO and NO. Also strongly inhibited by etazolate hydrochloride, a selective cAMP PDE inhibitor. PDE activity is inhibited in the absence of oxygen. Heme-based oxygen sensor protein displaying phosphodiesterase (PDE) activity toward c-di-GMP in response to oxygen availability. Involved in the modulation of intracellular c-di-GMP levels, in association with DosC which catalyzes the biosynthesis of c-di-GMP (diguanylate cyclase activity). Cyclic-di-GMP is a second messenger which controls cell surface-associated traits in bacteria. Has very poor PDE activity on cAMP but is not active with cGMP, bis(p-nitrophenyl) phosphate or p-nitrophenyl phosphate. Via its PDE activity on c-di-GMP, DosP regulates biofilm formation through the repression of transcription of the csgBAC operon, which encodes curli structural subunits. The polypeptide is Oxygen sensor protein DosP (dosP) (Escherichia coli (strain K12)).